We begin with the raw amino-acid sequence, 342 residues long: Fructose-1,6-bisphosphatase class 1 (342 aa).

Residues Glu97, Asp119, Leu121, and Asp122 each contribute to the Mg(2+) site. Substrate-binding positions include 122 to 125, Asn215, Tyr247, and Lys280; that span reads DGSS. A Mg(2+)-binding site is contributed by Glu286.

Belongs to the FBPase class 1 family. In terms of assembly, homotetramer. Mg(2+) is required as a cofactor.

The protein localises to the cytoplasm. It catalyses the reaction beta-D-fructose 1,6-bisphosphate + H2O = beta-D-fructose 6-phosphate + phosphate. It participates in carbohydrate biosynthesis; gluconeogenesis. This Leptospira borgpetersenii serovar Hardjo-bovis (strain JB197) protein is Fructose-1,6-bisphosphatase class 1.